The following is a 392-amino-acid chain: Elongation factor Tu-3 (392 aa).

The 197-residue stretch at 10-206 folds into the tr-type G domain; the sequence is KPHLNIGTMG…AVDTYVPMPE (197 aa). A G1 region spans residues 19–26; the sequence is GHVDHGKT. 19–26 contributes to the GTP binding site; it reads GHVDHGKT. Thr26 provides a ligand contact to Mg(2+). The tract at residues 63 to 67 is G2; it reads GITIN. Positions 84–87 are G3; sequence DMPG. Residues 84 to 88 and 139 to 142 each bind GTP; these read DMPGH and NKAD. The interval 139–142 is G4; that stretch reads NKAD. The interval 176–178 is G5; sequence SGL.

The protein belongs to the TRAFAC class translation factor GTPase superfamily. Classic translation factor GTPase family. EF-Tu/EF-1A subfamily. As to quaternary structure, monomer.

The protein resides in the cytoplasm. It carries out the reaction GTP + H2O = GDP + phosphate + H(+). Its function is as follows. GTP hydrolase that promotes the GTP-dependent binding of aminoacyl-tRNA to the A-site of ribosomes during protein biosynthesis. In Streptomyces coelicolor (strain ATCC BAA-471 / A3(2) / M145), this protein is Elongation factor Tu-3.